The following is a 469-amino-acid chain: Uridine kinase-like protein 4 (469 aa).

Residues 46–249 form a uridine kinase region; it reads QRQPFVIGVA…IVQHICTKLG (204 aa). The uracil phosphoribosyltransferase stretch occupies residues 259-469; sequence NLYVIHSTFQ…GDRYFGTDDD (211 aa). GTP-binding positions include lysine 283, arginine 292, and 326–329; that span reads CKRL. 2 residues coordinate 5-phospho-alpha-D-ribose 1-diphosphate: arginine 336 and arginine 361. Residue arginine 381 coordinates GTP. 5-phospho-alpha-D-ribose 1-diphosphate-binding positions include aspartate 387, 392-395, and glutamate 458; that span reads TGNS. 457–459 serves as a coordination point for uracil; that stretch reads GEF.

This sequence in the N-terminal section; belongs to the uridine kinase family. The protein in the C-terminal section; belongs to the UPRTase family. Mg(2+) serves as cofactor.

The catalysed reaction is UMP + diphosphate = 5-phospho-alpha-D-ribose 1-diphosphate + uracil. It carries out the reaction cytidine + ATP = CMP + ADP + H(+). The enzyme catalyses uridine + ATP = UMP + ADP + H(+). It functions in the pathway pyrimidine metabolism; UMP biosynthesis via salvage pathway; UMP from uracil: step 1/1. The protein operates within pyrimidine metabolism; CTP biosynthesis via salvage pathway; CTP from cytidine: step 1/3. It participates in pyrimidine metabolism; UMP biosynthesis via salvage pathway; UMP from uridine: step 1/1. With respect to regulation, allosterically activated by GTP. Involved in the pyrimidine salvage pathway. The uracil phosphoribosyltransferase (UPRT) activity, that catalyzes the conversion of uracil and 5-phospho-alpha-D-ribose 1-diphosphate (PRPP) to UMP and diphosphate, is unsure. This Arabidopsis thaliana (Mouse-ear cress) protein is Uridine kinase-like protein 4 (UKL4).